Here is a 157-residue protein sequence, read N- to C-terminus: MRCPFCGHEDTQVKDSRPTDDGTAIRRRRSCTACMQRFTTVERVQLRELIVVKTDQRRVVFDRDKLTRSVQIALRKRPIDPDRIEKMITGIVRQLESSGETEIPSKLIGELVMQTLKEVDDVAYVRFASVYRNFSDAGDFQTFLGGQAASKESDESS.

A zinc finger spans residues 3–34; sequence CPFCGHEDTQVKDSRPTDDGTAIRRRRSCTAC. An ATP-cone domain is found at 49-139; that stretch reads LIVVKTDQRR…VYRNFSDAGD (91 aa).

It belongs to the NrdR family. The cofactor is Zn(2+).

Its function is as follows. Negatively regulates transcription of bacterial ribonucleotide reductase nrd genes and operons by binding to NrdR-boxes. In Granulibacter bethesdensis (strain ATCC BAA-1260 / CGDNIH1), this protein is Transcriptional repressor NrdR.